The primary structure comprises 750 residues: Coiled-coil domain-containing protein 142 (750 aa).

The interval Met-1–Glu-29 is disordered. Residues Ala-87 to Asp-110 are a coiled coil. The tract at residues Leu-687–Pro-714 is disordered. Residues Pro-693–Leu-707 show a composition bias toward polar residues.

This Homo sapiens (Human) protein is Coiled-coil domain-containing protein 142 (CCDC142).